Here is a 182-residue protein sequence, read N- to C-terminus: Adenine phosphoribosyltransferase (182 aa).

This sequence belongs to the purine/pyrimidine phosphoribosyltransferase family. Homodimer.

It is found in the cytoplasm. The catalysed reaction is AMP + diphosphate = 5-phospho-alpha-D-ribose 1-diphosphate + adenine. The protein operates within purine metabolism; AMP biosynthesis via salvage pathway; AMP from adenine: step 1/1. Its function is as follows. Catalyzes a salvage reaction resulting in the formation of AMP, that is energically less costly than de novo synthesis. This is Adenine phosphoribosyltransferase from Renibacterium salmoninarum (strain ATCC 33209 / DSM 20767 / JCM 11484 / NBRC 15589 / NCIMB 2235).